A 385-amino-acid polypeptide reads, in one-letter code: Queuine tRNA-ribosyltransferase (385 aa).

Asp-92 functions as the Proton acceptor in the catalytic mechanism. Residues 92–96 (DSGGF), Asp-146, Gln-188, and Gly-215 contribute to the substrate site. Positions 246-252 (GVGHPED) are RNA binding. Residue Asp-265 is the Nucleophile of the active site. The tract at residues 270 to 274 (TRTGR) is RNA binding; important for wobble base 34 recognition. Residues Cys-303, Cys-305, Cys-308, and His-334 each contribute to the Zn(2+) site.

It belongs to the queuine tRNA-ribosyltransferase family. In terms of assembly, homodimer. Within each dimer, one monomer is responsible for RNA recognition and catalysis, while the other monomer binds to the replacement base PreQ1. It depends on Zn(2+) as a cofactor.

It catalyses the reaction 7-aminomethyl-7-carbaguanine + guanosine(34) in tRNA = 7-aminomethyl-7-carbaguanosine(34) in tRNA + guanine. It functions in the pathway tRNA modification; tRNA-queuosine biosynthesis. Its function is as follows. Catalyzes the base-exchange of a guanine (G) residue with the queuine precursor 7-aminomethyl-7-deazaguanine (PreQ1) at position 34 (anticodon wobble position) in tRNAs with GU(N) anticodons (tRNA-Asp, -Asn, -His and -Tyr). Catalysis occurs through a double-displacement mechanism. The nucleophile active site attacks the C1' of nucleotide 34 to detach the guanine base from the RNA, forming a covalent enzyme-RNA intermediate. The proton acceptor active site deprotonates the incoming PreQ1, allowing a nucleophilic attack on the C1' of the ribose to form the product. After dissociation, two additional enzymatic reactions on the tRNA convert PreQ1 to queuine (Q), resulting in the hypermodified nucleoside queuosine (7-(((4,5-cis-dihydroxy-2-cyclopenten-1-yl)amino)methyl)-7-deazaguanosine). This Thermus thermophilus (strain ATCC BAA-163 / DSM 7039 / HB27) protein is Queuine tRNA-ribosyltransferase.